The following is a 518-amino-acid chain: MTHLQFDNRLRAQLPGDPEQGPRRREVLAAWSAVRPTPVAAPTLLAYSADVAQRLGLRAEDLASPQFAEVFGGNALYPGMQPWAVNYGGHQFGHWAGQLGDGRAISLGEAIGVDGGRYELQLKGAGPTPYSRGADGRAVLRSSIREFLCSEAMHYLGVPTTRALSLVGTGDAVVRDMFYDGHPRREPGAIVCRVAPSFIRFGNFELPAARGDVDLLRQWVDFTLARDFPDLPGSGEDRIAAWFGQVCERTAVMVAHWMRVGFVHGVMNTDNMSILGLTIDYGPYGWVDDYDPDWTPNTTDAQGRRYRFGTQPQVAYWNLGRLAQALSPLFGDAASLQAGLDQFRDTYLACDRRDTAAKLGLAECQDEDLHLIDDLRALMREAEMDMTLTFRGLVDLSPQQPDASVLREAFYDETKRAAQAPALGAWLQRYAARCLQDGASDAVRASRMRAANPRYVLRNYLAQQAIDQAEQGDLSGVHALLEVMQRPYDDQPRRESFAAKRPDWARDRAGCSMLSCSS.

Positions 1 to 10 (MTHLQFDNRL) are enriched in basic and acidic residues. The tract at residues 1-23 (MTHLQFDNRLRAQLPGDPEQGPR) is disordered. Residues Gly100, Gly102, Arg103, Lys123, Asp135, Gly136, Arg193, and Arg200 each coordinate ATP. The Proton acceptor role is filled by Asp270. Mg(2+)-binding residues include Asn271 and Asp280. Asp280 serves as a coordination point for ATP.

The protein belongs to the SELO family. Requires Mg(2+) as cofactor. Mn(2+) serves as cofactor.

The enzyme catalyses L-seryl-[protein] + ATP = 3-O-(5'-adenylyl)-L-seryl-[protein] + diphosphate. It catalyses the reaction L-threonyl-[protein] + ATP = 3-O-(5'-adenylyl)-L-threonyl-[protein] + diphosphate. It carries out the reaction L-tyrosyl-[protein] + ATP = O-(5'-adenylyl)-L-tyrosyl-[protein] + diphosphate. The catalysed reaction is L-histidyl-[protein] + UTP = N(tele)-(5'-uridylyl)-L-histidyl-[protein] + diphosphate. The enzyme catalyses L-seryl-[protein] + UTP = O-(5'-uridylyl)-L-seryl-[protein] + diphosphate. It catalyses the reaction L-tyrosyl-[protein] + UTP = O-(5'-uridylyl)-L-tyrosyl-[protein] + diphosphate. Functionally, nucleotidyltransferase involved in the post-translational modification of proteins. It can catalyze the addition of adenosine monophosphate (AMP) or uridine monophosphate (UMP) to a protein, resulting in modifications known as AMPylation and UMPylation. The chain is Protein nucleotidyltransferase YdiU from Xanthomonas campestris pv. campestris (strain B100).